Here is a 709-residue protein sequence, read N- to C-terminus: ATP-dependent zinc metalloprotease FtsH (709 aa).

The Cytoplasmic portion of the chain corresponds to 1-25; sequence MKKNKGLNEATTSEKPQFPKRTAWK. A helical membrane pass occupies residues 26 to 46; sequence IFWWVVILAIIIGILVYILMP. The Extracellular segment spans residues 47 to 171; that stretch reads RATTAVIEKW…FVAPDTRARD (125 aa). A helical transmembrane segment spans residues 172-192; the sequence is VLNIFFGLLPIIIFVIFFLLF. Topologically, residues 193–709 are cytoplasmic; it reads WRSARGISGG…DTEKDSETNS (517 aa). 268–275 is a binding site for ATP; sequence GPPGTGKT. A Zn(2+)-binding site is contributed by His-490. Residue Glu-491 is part of the active site. 2 residues coordinate Zn(2+): His-494 and Asp-569. Residues 673 to 709 are disordered; the sequence is ILAQKQEQQAKQKAEAKEAKLNKKTEKDTEKDSETNS. Basic and acidic residues predominate over residues 680–709; that stretch reads QQAKQKAEAKEAKLNKKTEKDTEKDSETNS.

The protein in the central section; belongs to the AAA ATPase family. This sequence in the C-terminal section; belongs to the peptidase M41 family. As to quaternary structure, homohexamer. Zn(2+) serves as cofactor.

It localises to the cell membrane. Acts as a processive, ATP-dependent zinc metallopeptidase for both cytoplasmic and membrane proteins. Plays a role in the quality control of integral membrane proteins. This Mycoplasma pneumoniae (strain ATCC 29342 / M129 / Subtype 1) (Mycoplasmoides pneumoniae) protein is ATP-dependent zinc metalloprotease FtsH.